The following is a 486-amino-acid chain: H2.0-like homeobox protein (486 aa).

2 disordered regions span residues 83–173 (ASFQ…SSKD) and 330–486 (KWRH…LGGL). The span at 125–135 (QQQQQQQQPQQ) shows a compositional bias: low complexity. The homeobox DNA-binding region spans 276-335 (RSWSRAVFSNLQRKGLEKRFEIQKYVTKPDRKQLAAMLGLTDAQVKVWFQNRRMKWRHSK). Basic and acidic residues-rich tracts occupy residues 334 to 349 (SKEA…EAGE) and 363 to 372 (EERSPSRSEG). Acidic residues predominate over residues 373–383 (EAESESSDPES). Basic and acidic residues predominate over residues 390–401 (DTERTEGTERSL). Positions 409-420 (ASAAGALLAASS) are enriched in low complexity. The span at 421-440 (GGSGGSGGGGGGGFNFGGLS) shows a compositional bias: gly residues. Positions 441 to 474 (SGSTTSAGSSGSHSSGGASELLPAPQPSLSSAPK) are enriched in low complexity. Residues 475–486 (SPEPVPAPLGGL) are compositionally biased toward pro residues.

This sequence belongs to the H2.0 homeobox family.

The protein localises to the nucleus. Its function is as follows. Transcription factor required for TBX21/T-bet-dependent maturation of Th1 cells as well as maintenance of Th1-specific gene expression. Involved in embryogenesis and hematopoiesis. The protein is H2.0-like homeobox protein (HLX) of Bos taurus (Bovine).